Reading from the N-terminus, the 487-residue chain is L-tartrate/succinate antiporter (487 aa).

The next 14 membrane-spanning stretches (helical) occupy residues 10-30 (YLAPLAVIAIIALLPLPAGLE), 33-53 (TWLYFAVFTGVIVGLILEPVP), 54-74 (GAVVAMVGISIIAILSPWLLF), 93-113 (WAVSGFSNSVIWLIFAAFMFG), 137-157 (TLFLGYAVMFSELILAPVTPS), 189-209 (IGSYIMWMGIVADCVTSAIFL), 236-256 (FLGMLPLSILLVLLVPWLAYV), 292-312 (LMVGALVLWIFGGDYIDAAMV), 313-333 (GYSVVALMLLLRIICWDDIVS), 340-360 (VFFWLASLITLATGLNNTGFI), 370-390 (SLSGYSPTIVMVALIVVFYLL), 393-413 (FFASATAYTSALAPMMIAAAL), 418-438 (IPLPVFCLMVGAAIGLGSILT), and 462-482 (LGAIFGLIFLVLLVITGLLWM).

It belongs to the SLC13A/DASS transporter (TC 2.A.47) family. DIT1 subfamily.

It localises to the cell inner membrane. The enzyme catalyses (2R,3R)-tartrate(out) + succinate(in) = (2R,3R)-tartrate(in) + succinate(out). In terms of biological role, catalyzes the uptake of tartrate in exchange for intracellular succinate. Essential for anaerobic L-tartrate fermentation. This Escherichia coli O6:H1 (strain CFT073 / ATCC 700928 / UPEC) protein is L-tartrate/succinate antiporter (ttdT).